Here is a 203-residue protein sequence, read N- to C-terminus: Large ribosomal subunit protein bL25 (203 aa).

This sequence belongs to the bacterial ribosomal protein bL25 family. CTC subfamily. As to quaternary structure, part of the 50S ribosomal subunit; part of the 5S rRNA/L5/L18/L25 subcomplex. Contacts the 5S rRNA. Binds to the 5S rRNA independently of L5 and L18.

This is one of the proteins that binds to the 5S RNA in the ribosome where it forms part of the central protuberance. This Rickettsia peacockii (strain Rustic) protein is Large ribosomal subunit protein bL25.